The chain runs to 303 residues: Glycine--tRNA ligase alpha subunit (303 aa).

Belongs to the class-II aminoacyl-tRNA synthetase family. In terms of assembly, tetramer of two alpha and two beta subunits.

Its subcellular location is the cytoplasm. It catalyses the reaction tRNA(Gly) + glycine + ATP = glycyl-tRNA(Gly) + AMP + diphosphate. This Salmonella paratyphi A (strain ATCC 9150 / SARB42) protein is Glycine--tRNA ligase alpha subunit.